A 496-amino-acid polypeptide reads, in one-letter code: Lysine--tRNA ligase (496 aa).

Glutamate 407 and glutamate 414 together coordinate Mg(2+).

It belongs to the class-II aminoacyl-tRNA synthetase family. In terms of assembly, homodimer. It depends on Mg(2+) as a cofactor.

It is found in the cytoplasm. It catalyses the reaction tRNA(Lys) + L-lysine + ATP = L-lysyl-tRNA(Lys) + AMP + diphosphate. The protein is Lysine--tRNA ligase of Staphylococcus haemolyticus (strain JCSC1435).